Reading from the N-terminus, the 429-residue chain is Tol-Pal system protein TolB (429 aa).

The N-terminal stretch at 1 to 21 is a signal peptide; it reads MKPVFKMLLSLLILWTSLLHA.

Belongs to the TolB family. The Tol-Pal system is composed of five core proteins: the inner membrane proteins TolA, TolQ and TolR, the periplasmic protein TolB and the outer membrane protein Pal. They form a network linking the inner and outer membranes and the peptidoglycan layer.

It localises to the periplasm. Part of the Tol-Pal system, which plays a role in outer membrane invagination during cell division and is important for maintaining outer membrane integrity. TolB occupies a key intermediary position in the Tol-Pal system because it communicates directly with both membrane-embedded components, Pal in the outer membrane and TolA in the inner membrane. In Hamiltonella defensa subsp. Acyrthosiphon pisum (strain 5AT), this protein is Tol-Pal system protein TolB.